The following is a 129-amino-acid chain: Fluoride-specific ion channel FluC (129 aa).

The next 4 membrane-spanning stretches (helical) occupy residues 4-24, 32-52, 69-89, and 105-125; these read LFVA…SGLI, FPWG…AFAT, FFMV…LQTL, and VLSV…AVLI. The Na(+) site is built by Gly-76 and Thr-79.

This sequence belongs to the fluoride channel Fluc/FEX (TC 1.A.43) family.

It is found in the cell inner membrane. The enzyme catalyses fluoride(in) = fluoride(out). With respect to regulation, na(+) is not transported, but it plays an essential structural role and its presence is essential for fluoride channel function. Its function is as follows. Fluoride-specific ion channel. Important for reducing fluoride concentration in the cell, thus reducing its toxicity. In Rhodospirillum rubrum (strain ATCC 11170 / ATH 1.1.1 / DSM 467 / LMG 4362 / NCIMB 8255 / S1), this protein is Fluoride-specific ion channel FluC.